Consider the following 476-residue polypeptide: tRNA sulfurtransferase (476 aa).

Positions Ala54–Ile156 constitute a THUMP domain. Residues Met174–Val175, Lys256, Gly278, and Gln287 contribute to the ATP site. Cys334 and Cys433 are oxidised to a cystine. The 83-residue stretch at Asn388–Glu470 folds into the Rhodanese domain. Cys433 functions as the Cysteine persulfide intermediate in the catalytic mechanism.

It belongs to the ThiI family.

It is found in the cytoplasm. It catalyses the reaction [ThiI sulfur-carrier protein]-S-sulfanyl-L-cysteine + a uridine in tRNA + 2 reduced [2Fe-2S]-[ferredoxin] + ATP + H(+) = [ThiI sulfur-carrier protein]-L-cysteine + a 4-thiouridine in tRNA + 2 oxidized [2Fe-2S]-[ferredoxin] + AMP + diphosphate. The catalysed reaction is [ThiS sulfur-carrier protein]-C-terminal Gly-Gly-AMP + S-sulfanyl-L-cysteinyl-[cysteine desulfurase] + AH2 = [ThiS sulfur-carrier protein]-C-terminal-Gly-aminoethanethioate + L-cysteinyl-[cysteine desulfurase] + A + AMP + 2 H(+). It participates in cofactor biosynthesis; thiamine diphosphate biosynthesis. In terms of biological role, catalyzes the ATP-dependent transfer of a sulfur to tRNA to produce 4-thiouridine in position 8 of tRNAs, which functions as a near-UV photosensor. Also catalyzes the transfer of sulfur to the sulfur carrier protein ThiS, forming ThiS-thiocarboxylate. This is a step in the synthesis of thiazole, in the thiamine biosynthesis pathway. The sulfur is donated as persulfide by IscS. This is tRNA sulfurtransferase from Thermoplasma volcanium (strain ATCC 51530 / DSM 4299 / JCM 9571 / NBRC 15438 / GSS1).